The following is a 355-amino-acid chain: uncharacterized protein (355 aa).

The signal sequence occupies residues 1-22; sequence MRLTHVTACICLLVAVAVLFSG.

It belongs to the bacterial solute-binding protein 1 family. WtpA subfamily.

This is an uncharacterized protein from Methanoculleus marisnigri (strain ATCC 35101 / DSM 1498 / JR1).